We begin with the raw amino-acid sequence, 116 residues long: Iron-sulfur cluster insertion protein ErpA (116 aa).

Positions 44, 108, and 110 each coordinate iron-sulfur cluster.

Belongs to the HesB/IscA family. In terms of assembly, homodimer. It depends on iron-sulfur cluster as a cofactor.

In terms of biological role, required for insertion of 4Fe-4S clusters for at least IspG. The protein is Iron-sulfur cluster insertion protein ErpA of Nitrosococcus oceani (strain ATCC 19707 / BCRC 17464 / JCM 30415 / NCIMB 11848 / C-107).